Reading from the N-terminus, the 165-residue chain is Cysteine and tyrosine-rich protein 1 (165 aa).

An N-terminal signal peptide occupies residues 1–29 (MDALRLPRRPGVLLPKLILLFVYAGDCLA). The Extracellular segment spans residues 30–61 (QCGKECHSYCCDGSTPYCCSYYAYIGNILSGT). Residues 62–82 (AIAGIVFGIVFIMGVIAGIAI) form a helical membrane-spanning segment. Residues 83–165 (CICMCMKNNR…SSSQNRIRDN (83 aa)) lie on the Cytoplasmic side of the membrane. A disordered region spans residues 125–165 (RTDLPPPYSAAPQASAQRSPPPPYPGNPRKYSSSQNRIRDN). Positions 154 to 165 (KYSSSQNRIRDN) are enriched in polar residues.

Belongs to the CYYR1 family.

It localises to the membrane. This Mus musculus (Mouse) protein is Cysteine and tyrosine-rich protein 1 (Cyyr1).